We begin with the raw amino-acid sequence, 1099 residues long: Sodium/potassium/calcium exchanger 1 (1099 aa).

At 1-452 (MGKLIRMGPQ…DLFSVEERRQ (452 aa)) the chain is on the extracellular side. Positions 123–134 (PTTTKNNYSPTA) are enriched in polar residues. Disordered stretches follow at residues 123–150 (PTTT…SSRT), 169–199 (TPRG…RVGT), and 284–304 (PRRV…KSNP). A glycan (N-linked (GlcNAc...) asparagine) is linked at Asn-290. Residues 453–473 (GWVVLHVFGMMYVFVALAIVC) traverse the membrane as a helical segment. At 474-497 (DEYFVPALGVITDKLQISEDVAGA) the chain is on the cytoplasmic side. One copy of the Alpha-1 repeat lies at 494-534 (VAGATFMAAGGSAPELFTSLIGVFISHSNVGIGTIVGSAVF). The chain crosses the membrane as a helical span at residues 498–518 (TFMAAGGSAPELFTSLIGVFI). Residues 519–522 (SHSN) are Extracellular-facing. The helical transmembrane segment at 523–543 (VGIGTIVGSAVFNILFVIGTC) threads the bilayer. Topologically, residues 544-563 (SLFSREILNLTWWPLFRDVS) are cytoplasmic. A helical transmembrane segment spans residues 564–584 (FYILDLIMLILFFLDSLIAWW). Position 585 (Glu-585) is a topological domain, extracellular. The chain crosses the membrane as a helical span at residues 586–606 (SLLLLLAYAFYVFTMKWNKHI). The Cytoplasmic segment spans residues 607 to 907 (EVWVKEQLSR…SLDWPETRQK (301 aa)). The residue at position 658 (Ser-658) is a Phosphoserine. Residues 690–901 (EKEEESLNQG…GNEEPLSLDW (212 aa)) form a disordered region. Residue Thr-724 is modified to Phosphothreonine. Residues 757–769 (PGEEGETAGEGET) are compositionally biased toward acidic residues. 2 stretches are compositionally biased toward basic and acidic residues: residues 813 to 825 (EIHA…KGNE) and 835 to 849 (AENH…KGVE). Acidic residues predominate over residues 857 to 892 (GDSEEEEEEEEEQEEEEEEEEQEEEEEEEEEEEEKG). Residues 908 to 928 (QAIYLFLLPIVFPLWLTVPDV) form a helical membrane-spanning segment. Topologically, residues 929–935 (RRQESRK) are extracellular. A helical transmembrane segment spans residues 936-956 (FFVFTFLGSIMWIAMFSYLMV). The Cytoplasmic segment spans residues 957–971 (WWAHQVGETIGISEE). Residues 972 to 992 (IMGLTILAAGTSIPDLITSVI) form a helical membrane-spanning segment. The stretch at 979–1010 (AAGTSIPDLITSVIVARKGLGDMAVSSSVGSN) is one Alpha-2 repeat. At 993–1010 (VARKGLGDMAVSSSVGSN) the chain is on the extracellular side. The helical transmembrane segment at 1011-1031 (IFDITVGLPVPWLLFSLINGL) threads the bilayer. Topologically, residues 1032–1039 (QPVPVSSN) are cytoplasmic. A helical transmembrane segment spans residues 1040-1060 (GLFCAIVLLFLMLLFVISSIA). Residues 1061 to 1068 (SCKWRMNK) lie on the Extracellular side of the membrane. A helical transmembrane segment spans residues 1069-1089 (ILGFTMFLLYFVFLIISVMLE). The Cytoplasmic portion of the chain corresponds to 1090–1099 (DRIISCPVSV).

It belongs to the Ca(2+):cation antiporter (CaCA) (TC 2.A.19) family. SLC24A subfamily. In terms of processing, the uncleaved signal sequence is required for efficient membrane targeting and proper membrane integration. As to expression, expressed in the retina, particularly in the inner segment, outer and inner nuclear layers, and ganglion cell layer.

Its subcellular location is the cell membrane. The catalysed reaction is Ca(2+)(out) + K(+)(out) + 4 Na(+)(in) = Ca(2+)(in) + K(+)(in) + 4 Na(+)(out). Calcium, potassium:sodium antiporter that transports 1 Ca(2+) and 1 K(+) in exchange for 4 Na(+). Critical component of the visual transduction cascade, controlling the calcium concentration of outer segments during light and darkness. Light causes a rapid lowering of cytosolic free calcium in the outer segment of both retinal rod and cone photoreceptors and the light-induced lowering of calcium is caused by extrusion via this protein which plays a key role in the process of light adaptation. This is Sodium/potassium/calcium exchanger 1 from Homo sapiens (Human).